The primary structure comprises 136 residues: HTH-type transcriptional regulator LrpA (136 aa).

Residues Ile-2–Ser-63 enclose the HTH asnC-type domain. A DNA-binding region (H-T-H motif) is located at residues Met-21–Val-40.

Its function is as follows. Negative regulation of glyA transcription and kinB-dependent sporulation. This chain is HTH-type transcriptional regulator LrpA (lrpA), found in Bacillus subtilis (strain 168).